Here is a 172-residue protein sequence, read N- to C-terminus: Peptidyl-prolyl cis-trans isomerase CYP18-4 (172 aa).

The PPIase cyclophilin-type domain occupies 7-170; it reads FFDMSLSGTP…KVVTITDCGQ (164 aa).

The protein belongs to the cyclophilin-type PPIase family. In terms of assembly, interacts with A.tumefaciens VirD2. As to expression, ubiquitous, with higher levels in roots and flowers. Confined to vascular tissues. Also detected in stigmas, base of siliques and anthers.

The protein localises to the cytoplasm. The catalysed reaction is [protein]-peptidylproline (omega=180) = [protein]-peptidylproline (omega=0). With respect to regulation, binds cyclosporin A (CsA). CsA mediates some of its effects via an inhibitory action on PPIase. PPIases accelerate the folding of proteins. It catalyzes the cis-trans isomerization of proline imidic peptide bonds in oligopeptides. The sequence is that of Peptidyl-prolyl cis-trans isomerase CYP18-4 (CYP18-4) from Arabidopsis thaliana (Mouse-ear cress).